Consider the following 230-residue polypeptide: Cytidylate kinase (230 aa).

12-20 is an ATP binding site; the sequence is GPSGAGKGT.

It belongs to the cytidylate kinase family. Type 1 subfamily.

The protein resides in the cytoplasm. It carries out the reaction CMP + ATP = CDP + ADP. It catalyses the reaction dCMP + ATP = dCDP + ADP. The chain is Cytidylate kinase from Yersinia enterocolitica serotype O:8 / biotype 1B (strain NCTC 13174 / 8081).